A 181-amino-acid chain; its full sequence is Large ribosomal subunit protein uL5 (181 aa).

Belongs to the universal ribosomal protein uL5 family. Part of the 50S ribosomal subunit; part of the 5S rRNA/L5/L18/L25 subcomplex. Contacts the 5S rRNA and the P site tRNA. Forms a bridge to the 30S subunit in the 70S ribosome.

Functionally, this is one of the proteins that bind and probably mediate the attachment of the 5S RNA into the large ribosomal subunit, where it forms part of the central protuberance. In the 70S ribosome it contacts protein S13 of the 30S subunit (bridge B1b), connecting the 2 subunits; this bridge is implicated in subunit movement. Contacts the P site tRNA; the 5S rRNA and some of its associated proteins might help stabilize positioning of ribosome-bound tRNAs. The sequence is that of Large ribosomal subunit protein uL5 from Helicobacter acinonychis (strain Sheeba).